We begin with the raw amino-acid sequence, 172 residues long: C-phycocyanin beta chain (172 aa).

Position 72 is an N4-methylasparagine (Asn72). 2 residues coordinate (2R,3E)-phycocyanobilin: Cys82 and Cys153.

This sequence belongs to the phycobiliprotein family. In terms of assembly, heterodimer of an alpha and a beta subunit, which further assembles into trimers and the trimers into hexamers. The basic functional unit of phycobiliproteins is a ring-shaped hexamer formed from two back-to-back trimers contacting via the alpha chain subunits. The trimers are composed of alpha/beta subunit heterodimers arranged around a three-fold axis of symmetry. The phycoerythrins also contain a gamma subunit which is located in the center of the hexamer. In terms of processing, contains two covalently linked bilin chromophores.

It localises to the plastid. The protein resides in the chloroplast thylakoid membrane. Its function is as follows. Light-harvesting photosynthetic bile pigment-protein from the phycobiliprotein complex (phycobilisome, PBS). Phycocyanin is the major phycobiliprotein in the PBS rod. In Porphyra purpurea (Red seaweed), this protein is C-phycocyanin beta chain (cpcB).